Reading from the N-terminus, the 672-residue chain is tRNA 5-methylaminomethyl-2-thiouridine biosynthesis bifunctional protein MnmC (672 aa).

Residues 1–235 (MTRVLEPAEP…KRDMTVARFA (235 aa)) are tRNA (mnm(5)s(2)U34)-methyltransferase. The interval 259-672 (IGAGLAGCAV…SAGPGVDAAG (414 aa)) is FAD-dependent cmnm(5)s(2)U34 oxidoreductase.

The protein in the N-terminal section; belongs to the methyltransferase superfamily. tRNA (mnm(5)s(2)U34)-methyltransferase family. It in the C-terminal section; belongs to the DAO family. FAD is required as a cofactor.

Its subcellular location is the cytoplasm. It carries out the reaction 5-aminomethyl-2-thiouridine(34) in tRNA + S-adenosyl-L-methionine = 5-methylaminomethyl-2-thiouridine(34) in tRNA + S-adenosyl-L-homocysteine + H(+). Functionally, catalyzes the last two steps in the biosynthesis of 5-methylaminomethyl-2-thiouridine (mnm(5)s(2)U) at the wobble position (U34) in tRNA. Catalyzes the FAD-dependent demodification of cmnm(5)s(2)U34 to nm(5)s(2)U34, followed by the transfer of a methyl group from S-adenosyl-L-methionine to nm(5)s(2)U34, to form mnm(5)s(2)U34. In Cupriavidus metallidurans (strain ATCC 43123 / DSM 2839 / NBRC 102507 / CH34) (Ralstonia metallidurans), this protein is tRNA 5-methylaminomethyl-2-thiouridine biosynthesis bifunctional protein MnmC.